Here is a 402-residue protein sequence, read N- to C-terminus: Protein kinase US3 homolog (402 aa).

Disordered regions lie at residues 1–21 (MSSS…KVHD) and 46–88 (FPDS…SPET). The Protein kinase domain maps to 102–386 (YNIVSSLSPG…AQDILMLPLF (285 aa)). ATP contacts are provided by residues 108–116 (LSPGSEGYI) and K129. D218 serves as the catalytic Proton acceptor.

This sequence belongs to the protein kinase superfamily. Ser/Thr protein kinase family. In terms of processing, phosphorylated by UL13 homolog; this phosphorylation regulates subsequent phosphorylation of UL31 and UL34 homologs by US3. Autophosphorylated.

The protein resides in the host cytoplasm. Its subcellular location is the host nucleus. It carries out the reaction L-seryl-[protein] + ATP = O-phospho-L-seryl-[protein] + ADP + H(+). The catalysed reaction is L-threonyl-[protein] + ATP = O-phospho-L-threonyl-[protein] + ADP + H(+). In terms of biological role, multifunctional serine/threonine kinase that plays a role in several processes including egress of virus particles from the nucleus, modulation of the actin cytoskeleton and inhibition of apoptosis. Phosphorylates UL31 and UL34 homologs, two critical regulators of capsid budding from nucleus to endoplasmic reticulum, thereby facilitating virion egress. Modulates and redistributes host components of the nuclear envelope, including LMNA, emerin/EMD and the nuclear matrix protein MATR3. Phosphorylates envelope glycoprotein B (gB), probably to direct it to the cell surface. Promotes virus intracellular spread by restructuring host cell cytoskeleton. Blocks host apoptosis to extend cell survival and allow efficient viral replication. Promotes viral gene expression by phosphorylating host HDAC2 to reduce viral genome silencing. This Gallus gallus (Chicken) protein is Protein kinase US3 homolog (MDV092).